A 357-amino-acid chain; its full sequence is Histidinol-phosphate aminotransferase 1 (357 aa).

N6-(pyridoxal phosphate)lysine is present on K217.

It belongs to the class-II pyridoxal-phosphate-dependent aminotransferase family. Histidinol-phosphate aminotransferase subfamily. In terms of assembly, homodimer. Pyridoxal 5'-phosphate is required as a cofactor.

The enzyme catalyses L-histidinol phosphate + 2-oxoglutarate = 3-(imidazol-4-yl)-2-oxopropyl phosphate + L-glutamate. It functions in the pathway amino-acid biosynthesis; L-histidine biosynthesis; L-histidine from 5-phospho-alpha-D-ribose 1-diphosphate: step 7/9. In Burkholderia lata (strain ATCC 17760 / DSM 23089 / LMG 22485 / NCIMB 9086 / R18194 / 383), this protein is Histidinol-phosphate aminotransferase 1.